The primary structure comprises 309 residues: Putative S-adenosyl-L-methionine-dependent methyltransferase Mvan_0104 (309 aa).

S-adenosyl-L-methionine contacts are provided by residues aspartate 134 and 163 to 164; that span reads DL.

Belongs to the UPF0677 family.

Exhibits S-adenosyl-L-methionine-dependent methyltransferase activity. This chain is Putative S-adenosyl-L-methionine-dependent methyltransferase Mvan_0104, found in Mycolicibacterium vanbaalenii (strain DSM 7251 / JCM 13017 / BCRC 16820 / KCTC 9966 / NRRL B-24157 / PYR-1) (Mycobacterium vanbaalenii).